The following is a 1401-amino-acid chain: DNA-directed RNA polymerase subunit beta'' (1401 aa).

Positions 224, 294, 301, and 304 each coordinate Zn(2+).

The protein belongs to the RNA polymerase beta' chain family. RpoC2 subfamily. As to quaternary structure, in plastids the minimal PEP RNA polymerase catalytic core is composed of four subunits: alpha, beta, beta', and beta''. When a (nuclear-encoded) sigma factor is associated with the core the holoenzyme is formed, which can initiate transcription. It depends on Zn(2+) as a cofactor.

It is found in the plastid. The protein localises to the chloroplast. It catalyses the reaction RNA(n) + a ribonucleoside 5'-triphosphate = RNA(n+1) + diphosphate. Functionally, DNA-dependent RNA polymerase catalyzes the transcription of DNA into RNA using the four ribonucleoside triphosphates as substrates. The protein is DNA-directed RNA polymerase subunit beta'' of Nymphaea alba (White water-lily).